The chain runs to 372 residues: N-methyl-L-tryptophan oxidase (372 aa).

An FAD-binding site is contributed by 4–34 (DLIIIGSGSVGAAAGYYATRAGLNVLMTDAH). Cysteine 308 is subject to S-8alpha-FAD cysteine.

The protein belongs to the MSOX/MTOX family. MTOX subfamily. In terms of assembly, monomer. FAD serves as cofactor.

It catalyses the reaction N(alpha)-methyl-L-tryptophan + O2 + H2O = L-tryptophan + formaldehyde + H2O2. Catalyzes the oxidative demethylation of N-methyl-L-tryptophan. The polypeptide is N-methyl-L-tryptophan oxidase (Escherichia coli O6:H1 (strain CFT073 / ATCC 700928 / UPEC)).